Reading from the N-terminus, the 143-residue chain is uncharacterized protein (143 aa).

The signal sequence occupies residues 1–16 (MSRNRLFLVAGSLAVA). Residues 114-134 (GAYVFLGPGFTPGSPSGGSGG) form a helical membrane-spanning segment.

It localises to the membrane. This is an uncharacterized protein from Mycobacterium tuberculosis (strain CDC 1551 / Oshkosh).